We begin with the raw amino-acid sequence, 185 residues long: Ribosome-recycling factor (185 aa).

The protein belongs to the RRF family.

The protein resides in the cytoplasm. Responsible for the release of ribosomes from messenger RNA at the termination of protein biosynthesis. May increase the efficiency of translation by recycling ribosomes from one round of translation to another. This is Ribosome-recycling factor from Symbiobacterium thermophilum (strain DSM 24528 / JCM 14929 / IAM 14863 / T).